A 199-amino-acid polypeptide reads, in one-letter code: FMN-dependent NADH:quinone oxidoreductase (199 aa).

FMN-binding positions include S10, 16-18, and 96-99; these read SVS and MYNF.

This sequence belongs to the azoreductase type 1 family. As to quaternary structure, homodimer. It depends on FMN as a cofactor.

The enzyme catalyses 2 a quinone + NADH + H(+) = 2 a 1,4-benzosemiquinone + NAD(+). It carries out the reaction N,N-dimethyl-1,4-phenylenediamine + anthranilate + 2 NAD(+) = 2-(4-dimethylaminophenyl)diazenylbenzoate + 2 NADH + 2 H(+). Functionally, quinone reductase that provides resistance to thiol-specific stress caused by electrophilic quinones. Also exhibits azoreductase activity. Catalyzes the reductive cleavage of the azo bond in aromatic azo compounds to the corresponding amines. The protein is FMN-dependent NADH:quinone oxidoreductase of Azotobacter vinelandii (strain DJ / ATCC BAA-1303).